A 189-amino-acid chain; its full sequence is MTTDVRILGIDPGLRRTGWGLITARGTKLSYLACGVVTSDGDLPLALRLRELHEGLTRVLTTHAPDEVSVEETFVNKDAQATLKLGHARAVALLVPALAGLPVAEYAANLVKKTVAGNGHAEKVQIQAMVKFLLPKAEFKLADAADALAIAITHASHRGAIALDRRHAVAAGSGPGAARIAAALARLDR.

Residues D11, E71, and D143 contribute to the active site. Mg(2+) is bound by residues D11, E71, and D143.

This sequence belongs to the RuvC family. As to quaternary structure, homodimer which binds Holliday junction (HJ) DNA. The HJ becomes 2-fold symmetrical on binding to RuvC with unstacked arms; it has a different conformation from HJ DNA in complex with RuvA. In the full resolvosome a probable DNA-RuvA(4)-RuvB(12)-RuvC(2) complex forms which resolves the HJ. Requires Mg(2+) as cofactor.

It localises to the cytoplasm. It carries out the reaction Endonucleolytic cleavage at a junction such as a reciprocal single-stranded crossover between two homologous DNA duplexes (Holliday junction).. In terms of biological role, the RuvA-RuvB-RuvC complex processes Holliday junction (HJ) DNA during genetic recombination and DNA repair. Endonuclease that resolves HJ intermediates. Cleaves cruciform DNA by making single-stranded nicks across the HJ at symmetrical positions within the homologous arms, yielding a 5'-phosphate and a 3'-hydroxyl group; requires a central core of homology in the junction. The consensus cleavage sequence is 5'-(A/T)TT(C/G)-3'. Cleavage occurs on the 3'-side of the TT dinucleotide at the point of strand exchange. HJ branch migration catalyzed by RuvA-RuvB allows RuvC to scan DNA until it finds its consensus sequence, where it cleaves and resolves the cruciform DNA. This chain is Crossover junction endodeoxyribonuclease RuvC, found in Methylorubrum populi (strain ATCC BAA-705 / NCIMB 13946 / BJ001) (Methylobacterium populi).